Here is a 770-residue protein sequence, read N- to C-terminus: ATP-dependent RNA helicase HCA4 (770 aa).

The short motif at 41–69 (KFFKDLPISDPTLKGLRESSFIKLTEIQA) is the Q motif element. Positions 72–246 (IPVSLQGHDV…RLSLTDYKTV (175 aa)) constitute a Helicase ATP-binding domain. 85-92 (AKTGSGKT) is a binding site for ATP. A DEAD box motif is present at residues 194–197 (DEAD). One can recognise a Helicase C-terminal domain in the interval 278 to 437 (KLDILFSFIK…SIKPQLQSLL (160 aa)). A phosphoserine mark is found at Ser-692, Ser-710, Ser-714, and Ser-743. The segment at 705 to 724 (GTGNLSDDMSDGDMPDSEGH) is disordered.

This sequence belongs to the DEAD box helicase family. DDX10/DBP4 subfamily. As to quaternary structure, interacts with the U3 and U14 snoRNAs. Associates with pre-ribosomal complexes.

Its subcellular location is the nucleus. It localises to the nucleolus. It catalyses the reaction ATP + H2O = ADP + phosphate + H(+). Functionally, ATP-dependent RNA helicase required for ribosome biogenesis. Involved in the release of U14 snoRNA in pre-ribosomal complexes. Required for pre-rRNA cleavage at site A2. This chain is ATP-dependent RNA helicase HCA4 (HCA4), found in Saccharomyces cerevisiae (strain ATCC 204508 / S288c) (Baker's yeast).